The chain runs to 145 residues: Transcription antitermination protein NusB (145 aa).

It belongs to the NusB family.

Functionally, involved in transcription antitermination. Required for transcription of ribosomal RNA (rRNA) genes. Binds specifically to the boxA antiterminator sequence of the ribosomal RNA (rrn) operons. This chain is Transcription antitermination protein NusB, found in Paraburkholderia phymatum (strain DSM 17167 / CIP 108236 / LMG 21445 / STM815) (Burkholderia phymatum).